The following is a 102-amino-acid chain: Putative lipid-transfer protein DIR1 (102 aa).

Residues 1-25 (MASKKAAMVMMAMIVIMAMLVDTSV) form the signal peptide. Disulfide bonds link Cys30–Cys67, Cys40–Cys56, Cys57–Cys94, and Cys69–Cys102. Residue Gln34 coordinates a 1-acyl-sn-glycero-3-phosphocholine. Glu36 is a binding site for Zn(2+). Asn38 serves as a coordination point for a 1-acyl-sn-glycero-3-phosphocholine. His62 contributes to the Zn(2+) binding site.

Belongs to the A9/FIL1 family. In terms of assembly, self-interacts and binds to AZI1. Does not interact with PDLP1. Zn(2+) is required as a cofactor.

Its subcellular location is the secreted. It is found in the extracellular space. It localises to the apoplast. The protein resides in the endoplasmic reticulum. The protein localises to the cell junction. Its subcellular location is the plasmodesma. In terms of biological role, putative lipid transfer protein required for systemic acquired resistance (SAR) long distance signaling. May interact with a lipid-derived molecule to promote long distance signaling associated with SAR. Together with AZI1, required for glycerol-3-phosphate- (G3P) and azelaic acid- (AA) induced systemic acquired resistance (SAR). Component of plant systemic immunity involved in priming defenses in a AA-dependent manner, by modulating production and/or translocation of a mobile signal(s) during SAR. Is able to bind with high affinity monoacylated phospholipids, mainly lysophosphatidylcholines. This chain is Putative lipid-transfer protein DIR1 (DIR1), found in Arabidopsis thaliana (Mouse-ear cress).